The sequence spans 66 residues: Large ribosomal subunit protein bL35 (66 aa).

Composition is skewed to basic residues over residues 1-16 and 31-45; these read MPKQ…RFKR and HRFH…RQLR. A disordered region spans residues 1–52; the sequence is MPKQKTHRASAKRFKRTGNGGLKRSNAYTSHRFHGKTKKQRRQLRKASMVSA.

Belongs to the bacterial ribosomal protein bL35 family.

This chain is Large ribosomal subunit protein bL35, found in Ligilactobacillus salivarius (strain UCC118) (Lactobacillus salivarius).